A 388-amino-acid polypeptide reads, in one-letter code: Succinyl-diaminopimelate desuccinylase (388 aa).

Zn(2+) is bound at residue histidine 71. Aspartate 73 is a catalytic residue. Aspartate 104 serves as a coordination point for Zn(2+). Glutamate 143 serves as the catalytic Proton acceptor. Zn(2+) contacts are provided by glutamate 144, glutamate 172, and histidine 361.

It belongs to the peptidase M20A family. DapE subfamily. As to quaternary structure, homodimer. It depends on Zn(2+) as a cofactor. Co(2+) is required as a cofactor.

It carries out the reaction N-succinyl-(2S,6S)-2,6-diaminopimelate + H2O = (2S,6S)-2,6-diaminopimelate + succinate. It participates in amino-acid biosynthesis; L-lysine biosynthesis via DAP pathway; LL-2,6-diaminopimelate from (S)-tetrahydrodipicolinate (succinylase route): step 3/3. In terms of biological role, catalyzes the hydrolysis of N-succinyl-L,L-diaminopimelic acid (SDAP), forming succinate and LL-2,6-diaminopimelate (DAP), an intermediate involved in the bacterial biosynthesis of lysine and meso-diaminopimelic acid, an essential component of bacterial cell walls. The polypeptide is Succinyl-diaminopimelate desuccinylase (Bradyrhizobium diazoefficiens (strain JCM 10833 / BCRC 13528 / IAM 13628 / NBRC 14792 / USDA 110)).